The primary structure comprises 146 residues: Hemoglobin subunit beta (146 aa).

Residues 2-146 form the Globin domain; sequence HWTAEEKQLI…VAHALARKYH (145 aa). The heme b site is built by His-63 and His-92.

It belongs to the globin family. In terms of assembly, heterotetramer of two alpha chains and two beta chains. Red blood cells.

Involved in oxygen transport from the lung to the various peripheral tissues. The chain is Hemoglobin subunit beta (HBB) from Aegypius monachus (Cinereous vulture).